A 395-amino-acid chain; its full sequence is MPVEKDLKTAYKALYDEKEPLKALHLYDEILKGSPTNLTALIFKAACLEKLYFGFSDWHSDATMENAKELLDKALMTAEGRGDRSKIGLVNFRYFVHFFNIKDYELAQSYFKKAKNLGYVDDTLPLWEDRLETKLNKKNKKQKDSTNKHTIKPVESIENRGDNNSSHSPISPLKIETAPQESPKFKIDWYQSSTSVTISLFTVNLPESKEQVNIYISPNDRRTLSISYQVPKSGSEFQYNAKLSHEVDPKAVSLKIFPKKLEITLSKIDSTQWKKLEEDILTESSRLSDEGKNSDSATRLLSAETASKERLSYPSSSKKKIDWSKLDIDEEADEEAGSADSFFQKLYAGADPDTKRAMMKSFIESNGTALSTDWEDVSKGTVKTSPPEGMEPKHW.

K32 is covalently cross-linked (Glycyl lysine isopeptide (Lys-Gly) (interchain with G-Cter in ubiquitin)). Residues 137 to 175 form a disordered region; the sequence is KKNKKQKDSTNKHTIKPVESIENRGDNNSSHSPISPLKI. Phosphoserine is present on residues S168 and S171. The 96-residue stretch at 182 to 277 folds into the CS domain; it reads SPKFKIDWYQ…IDSTQWKKLE (96 aa). The SGS domain occupies 312–395; the sequence is SYPSSSKKKI…PPEGMEPKHW (84 aa). A disordered region spans residues 373–395; it reads DWEDVSKGTVKTSPPEGMEPKHW.

Belongs to the SGT1 family. As to quaternary structure, interacts with SKP1/CBF3D. Part of SCF E3 ubiquitin ligase complexes containing SKP1, CDC53, HRT1 and some F-box proteins. Interacts with CIR1/CDC35.

Involved in ubiquitination and subsequent proteasomal degradation of target proteins. Required for both entry into S phase and kinetochore function. Also involved in cyclic AMP (cAMP) pathway, possibly by participating in the assembly or the conformational activation of specific multiprotein complexes. The polypeptide is Protein SGT1 (Saccharomyces cerevisiae (strain ATCC 204508 / S288c) (Baker's yeast)).